We begin with the raw amino-acid sequence, 970 residues long: Glycine dehydrogenase (decarboxylating) (970 aa).

Position 723 is an N6-(pyridoxal phosphate)lysine (Lys-723).

The protein belongs to the GcvP family. In terms of assembly, the glycine cleavage system is composed of four proteins: P, T, L and H. Pyridoxal 5'-phosphate serves as cofactor.

It carries out the reaction N(6)-[(R)-lipoyl]-L-lysyl-[glycine-cleavage complex H protein] + glycine + H(+) = N(6)-[(R)-S(8)-aminomethyldihydrolipoyl]-L-lysyl-[glycine-cleavage complex H protein] + CO2. Functionally, the glycine cleavage system catalyzes the degradation of glycine. The P protein binds the alpha-amino group of glycine through its pyridoxal phosphate cofactor; CO(2) is released and the remaining methylamine moiety is then transferred to the lipoamide cofactor of the H protein. The chain is Glycine dehydrogenase (decarboxylating) from Burkholderia pseudomallei (strain 1106a).